A 346-amino-acid polypeptide reads, in one-letter code: Tyrosine--tRNA ligase (346 aa).

Tyr35 contributes to the L-tyrosine binding site. Residues 40-48 carry the 'HIGH' region motif; that stretch reads PTGEMHIGH. Residues Tyr162, Gln166, Asp169, and Gln184 each coordinate L-tyrosine.

The protein belongs to the class-I aminoacyl-tRNA synthetase family. TyrS type 3 subfamily. In terms of assembly, homodimer.

It localises to the cytoplasm. The catalysed reaction is tRNA(Tyr) + L-tyrosine + ATP = L-tyrosyl-tRNA(Tyr) + AMP + diphosphate + H(+). Catalyzes the attachment of tyrosine to tRNA(Tyr) in a two-step reaction: tyrosine is first activated by ATP to form Tyr-AMP and then transferred to the acceptor end of tRNA(Tyr). The sequence is that of Tyrosine--tRNA ligase from Haloarcula marismortui (strain ATCC 43049 / DSM 3752 / JCM 8966 / VKM B-1809) (Halobacterium marismortui).